We begin with the raw amino-acid sequence, 676 residues long: WD repeat-containing protein 48 (676 aa).

Y28 bears the Phosphotyrosine mark. WD repeat units follow at residues 28–67 (YNRNGVNALQLDPALNRLFTAGRDSIIRIWSVNQHKQDPY), 73–112 (HHTDWVNDVVLCCNGKTLISASSDTTVKVWNAHKGFCMST), 115–154 (THKDYVKALAYAKDKELVASAGLDRQIFLWDVNTLTALTA), 166–205 (GNKDSIYSLAMNQLGTIIVSGSTEKVLRVWDPRTCAKLMK), 208–247 (GHTDNVKALLLHRDGTQCLSGSSDGTIRLWSLGQQRCIAT), 250–289 (VHDEGVWALQVNDAFTHVYSGGRDRKIYCTDLRNPDIRVL), 292–334 (EEKA…NFRA), and 358–397 (KGGASIIQCHILNDKRHILTKDTNNNVAYWDVLKACKVED). K214 bears the N6-acetyllysine mark. An N6-acetyllysine modification is found at K578. Residues 607–628 (LDNESQTTSSSNNEKPEQEKEE) form a disordered region. The segment covering 609-619 (NESQTTSSSNN) has biased composition (low complexity). At T613 the chain carries Phosphothreonine.

Belongs to the WD repeat WDR48 family. As to quaternary structure, interacts with USP46. Interacts with USP1. Interacts with USP12. Component of the USP12-WDR20-WDR48 deubiquitinating complex. Component of the USP12-DMWD-WDR48 deubiquitinating complex. Interacts with PHLPP1. Interacts with RAD51AP1; the interaction is direct and promotes formation of a trimeric complex with RAD51 via RAD51AP1. Interacts with ATAD5; the interaction regulates USP1-mediated PCNA deubiquitination. Interacts with RAD51; the interaction is enhanced under replication stress. Interacts with ITCH; the interaction is more efficient when both USP12 and WDR48/UAF1 are involved and may facilitate recruitment of the USP12 deubiquitinating complex to Notch.

The protein resides in the nucleus. It is found in the cytoplasm. The protein localises to the lysosome. Its subcellular location is the late endosome. Regulator of deubiquitinating complexes, which acts as a strong activator of USP1, USP12 and USP46. Enhances the USP1-mediated deubiquitination of FANCD2; USP1 being almost inactive by itself. Activates deubiquitination by increasing the catalytic turnover without increasing the affinity of deubiquitinating enzymes for the substrate. Also activates deubiquitinating activity of complexes containing USP12. Docks at the distal end of the USP12 fingers domain and induces a cascade of structural changes leading to the activation of the enzyme. Together with RAD51AP1, promotes DNA repair by stimulating RAD51-mediated homologous recombination. Binds single-stranded DNA (ssDNA) and double-stranded DNA (dsDNA). DNA-binding is required both for USP1-mediated deubiquitination of FANCD2 and stimulation of RAD51-mediated homologous recombination: both WDR48/UAF1 and RAD51AP1 have coordinated role in DNA-binding during these processes. Together with ATAD5 and by regulating USP1 activity, has a role in PCNA-mediated translesion synthesis (TLS) by deubiquitinating monoubiquitinated PCNA. Together with ATAD5, has a role in recruiting RAD51 to stalled forks during replication stress. The chain is WD repeat-containing protein 48 (Wdr48) from Mus musculus (Mouse).